The sequence spans 88 residues: Small ribosomal subunit protein bS20 (88 aa).

This sequence belongs to the bacterial ribosomal protein bS20 family.

In terms of biological role, binds directly to 16S ribosomal RNA. The polypeptide is Small ribosomal subunit protein bS20 (Rhodopseudomonas palustris (strain BisA53)).